The primary structure comprises 158 residues: Cyclic pyranopterin monophosphate synthase (158 aa).

Substrate is bound by residues M74–H76 and M112–E113. D127 is an active-site residue.

This sequence belongs to the MoaC family. As to quaternary structure, homohexamer; trimer of dimers.

It catalyses the reaction (8S)-3',8-cyclo-7,8-dihydroguanosine 5'-triphosphate = cyclic pyranopterin phosphate + diphosphate. Its pathway is cofactor biosynthesis; molybdopterin biosynthesis. In terms of biological role, catalyzes the conversion of (8S)-3',8-cyclo-7,8-dihydroguanosine 5'-triphosphate to cyclic pyranopterin monophosphate (cPMP). This is Cyclic pyranopterin monophosphate synthase from Helicobacter pylori (strain HPAG1).